Reading from the N-terminus, the 130-residue chain is Fluoride-specific ion channel FluC (130 aa).

A run of 4 helical transmembrane segments spans residues glycine 2–leucine 22, glycine 36–isoleucine 56, phenylalanine 71–isoleucine 91, and isoleucine 100–leucine 120. 2 residues coordinate Na(+): glycine 79 and threonine 82.

Belongs to the fluoride channel Fluc/FEX (TC 1.A.43) family.

It is found in the cell inner membrane. It catalyses the reaction fluoride(in) = fluoride(out). Na(+) is not transported, but it plays an essential structural role and its presence is essential for fluoride channel function. Its function is as follows. Fluoride-specific ion channel. Important for reducing fluoride concentration in the cell, thus reducing its toxicity. The chain is Fluoride-specific ion channel FluC from Francisella tularensis subsp. tularensis (strain FSC 198).